Here is a 94-residue protein sequence, read N- to C-terminus: Large ribosomal subunit protein uL23 (94 aa).

The protein belongs to the universal ribosomal protein uL23 family. Part of the 50S ribosomal subunit. Contacts protein L29, and trigger factor when it is bound to the ribosome.

One of the early assembly proteins it binds 23S rRNA. One of the proteins that surrounds the polypeptide exit tunnel on the outside of the ribosome. Forms the main docking site for trigger factor binding to the ribosome. This is Large ribosomal subunit protein uL23 from Latilactobacillus sakei subsp. sakei (strain 23K) (Lactobacillus sakei subsp. sakei).